The primary structure comprises 603 residues: DNA mismatch repair protein MutL (603 aa).

The disordered stretch occupies residues 361-383 (KETPTLFSKPTIPEYVPSDEDAP).

The protein belongs to the DNA mismatch repair MutL/HexB family.

Functionally, this protein is involved in the repair of mismatches in DNA. It is required for dam-dependent methyl-directed DNA mismatch repair. May act as a 'molecular matchmaker', a protein that promotes the formation of a stable complex between two or more DNA-binding proteins in an ATP-dependent manner without itself being part of a final effector complex. The sequence is that of DNA mismatch repair protein MutL from Listeria monocytogenes serotype 4b (strain CLIP80459).